Reading from the N-terminus, the 463-residue chain is uncharacterized protein (463 aa).

Helical transmembrane passes span 6 to 26, 31 to 51, 60 to 80, 101 to 123, 130 to 152, 189 to 209, 242 to 262, 269 to 289, 304 to 324, 413 to 433, and 443 to 463; these read ILPVHVLYVFFIGAIILFMLL, TFISLFGIFIISLWASHSLSA, FIYAAGELLPTIFIICFIVSM, VRGPVTAYWLIGGLMFAISLFFW, LIGAVLLPAAARAGLTPLAAAMA, ASIPLVLIMGVTTTTAAFIMI, SILAFLIPLAFLADIACMLLF, ATALIGGSAICILFTVHFFVY, GFKFGFKVFGPVIPIAAFFYL, AIWVGGGTLVPWALIPAAAIC, and KNFIPVAIGLLVTTLAAVMML.

The protein resides in the cell membrane. This is an uncharacterized protein from Bacillus subtilis (strain 168).